Reading from the N-terminus, the 310-residue chain is Protoheme IX farnesyltransferase (310 aa).

A run of 9 helical transmembrane segments spans residues 26–45, 49–71, 95–115, 118–138, 147–167, 174–194, 220–240, 243–263, and 289–309; these read VMSLVVFTALVGLLVAPVTV, IALTGILFIALGAGASGALNMWW, GEALGIGLALSGIAVVMLGLA, LFAAGLLAFTIFFYAVVYSMW, IVIGGAAGAFPPMIGWAVATG, LFMFALIFMWTPPHFWSLALF, VLVYSLLLAPLAVAGAFTGIG, LYLATALALNGWLLVGAVRIW, and LFLHFGAILAEAALKPYGLGG.

The protein belongs to the UbiA prenyltransferase family. Protoheme IX farnesyltransferase subfamily. As to quaternary structure, interacts with CtaA.

The protein resides in the cell inner membrane. It carries out the reaction heme b + (2E,6E)-farnesyl diphosphate + H2O = Fe(II)-heme o + diphosphate. Its pathway is porphyrin-containing compound metabolism; heme O biosynthesis; heme O from protoheme: step 1/1. Functionally, converts heme B (protoheme IX) to heme O by substitution of the vinyl group on carbon 2 of heme B porphyrin ring with a hydroxyethyl farnesyl side group. This Cereibacter sphaeroides (strain ATCC 17029 / ATH 2.4.9) (Rhodobacter sphaeroides) protein is Protoheme IX farnesyltransferase.